The primary structure comprises 89 residues: MEEKVQEFLKDSTKEQKVFFESLNNQTERVCQQTESGDISCIELAAAETKLFATMQSLGFICTLSADPNRPTVFECKRELDTNERKERL.

This is an uncharacterized protein from Schizosaccharomyces pombe (strain 972 / ATCC 24843) (Fission yeast).